The chain runs to 321 residues: tRNA(Ile)-lysidine synthase (321 aa).

20–25 (SGGADS) lines the ATP pocket.

The protein belongs to the tRNA(Ile)-lysidine synthase family.

The protein localises to the cytoplasm. It carries out the reaction cytidine(34) in tRNA(Ile2) + L-lysine + ATP = lysidine(34) in tRNA(Ile2) + AMP + diphosphate + H(+). Ligates lysine onto the cytidine present at position 34 of the AUA codon-specific tRNA(Ile) that contains the anticodon CAU, in an ATP-dependent manner. Cytidine is converted to lysidine, thus changing the amino acid specificity of the tRNA from methionine to isoleucine. The chain is tRNA(Ile)-lysidine synthase from Bordetella pertussis (strain Tohama I / ATCC BAA-589 / NCTC 13251).